Consider the following 102-residue polypeptide: ATP-dependent Clp protease adapter protein ClpS (102 aa).

The protein belongs to the ClpS family. As to quaternary structure, binds to the N-terminal domain of the chaperone ClpA.

In terms of biological role, involved in the modulation of the specificity of the ClpAP-mediated ATP-dependent protein degradation. The sequence is that of ATP-dependent Clp protease adapter protein ClpS from Shewanella oneidensis (strain ATCC 700550 / JCM 31522 / CIP 106686 / LMG 19005 / NCIMB 14063 / MR-1).